The primary structure comprises 368 residues: MTIKIQFKQTLGETNFDIDLSLPRNEISALFGRSGAGKTTLINVISGLVTPQQGRIAIGDHVLFDSEQGINLPTHKRKIGYVFQDSRLFPHYSVQGNLLYGVKEKDDAYFDAVTDLLSIKPLLKRFPISLSGGEKQRVAIARALLSKPDLLLMDEPLASLDMPRKREVMPFLEELSDKVNIPIIYVTHSLQEILRLAQHLAIIDKGQVTTSGKLEEVWASHAMRPWQSFSDQSSLFEGKIEAHHSQYALTRVKLAPNASLWVQKIDGEPDTPIRLQVRANDVSIALEQPKATSIRNVLPAEVHSIEAFNAGDDKQSINVSLQLDDGCYLWATITPWALDDLNLKVGDKVYAQVKGVSVTQRDVALAPH.

The ABC transporter domain maps to 1-230; the sequence is MTIKIQFKQT…HAMRPWQSFS (230 aa). Residue 32 to 39 participates in ATP binding; that stretch reads GRSGAGKT. The Mop domain occupies 291-362; it reads ATSIRNVLPA…VKGVSVTQRD (72 aa).

It belongs to the ABC transporter superfamily. Molybdate importer (TC 3.A.1.8) family. As to quaternary structure, the complex is composed of two ATP-binding proteins (ModC), two transmembrane proteins (ModB) and a solute-binding protein (ModA).

It localises to the cell inner membrane. The catalysed reaction is molybdate(out) + ATP + H2O = molybdate(in) + ADP + phosphate + H(+). Its function is as follows. Part of the ABC transporter complex ModABC involved in molybdenum import. Responsible for energy coupling to the transport system. This chain is Molybdenum import ATP-binding protein ModC, found in Vibrio parahaemolyticus serotype O3:K6 (strain RIMD 2210633).